A 212-amino-acid polypeptide reads, in one-letter code: Pyridoxine/pyridoxamine 5'-phosphate oxidase (212 aa).

Substrate-binding positions include 8–11 and lysine 66; that span reads RREY. Residues 61-66, 76-77, arginine 82, lysine 83, and glutamine 105 contribute to the FMN site; these read RIVLLK and FT. Substrate contacts are provided by tyrosine 123, arginine 127, and serine 131. FMN contacts are provided by residues 140 to 141 and tryptophan 185; that span reads QS. 191–193 provides a ligand contact to substrate; that stretch reads RLH. Arginine 195 is a binding site for FMN.

It belongs to the pyridoxamine 5'-phosphate oxidase family. In terms of assembly, homodimer. FMN is required as a cofactor.

The enzyme catalyses pyridoxamine 5'-phosphate + O2 + H2O = pyridoxal 5'-phosphate + H2O2 + NH4(+). It catalyses the reaction pyridoxine 5'-phosphate + O2 = pyridoxal 5'-phosphate + H2O2. It functions in the pathway cofactor metabolism; pyridoxal 5'-phosphate salvage; pyridoxal 5'-phosphate from pyridoxamine 5'-phosphate: step 1/1. Its pathway is cofactor metabolism; pyridoxal 5'-phosphate salvage; pyridoxal 5'-phosphate from pyridoxine 5'-phosphate: step 1/1. Catalyzes the oxidation of either pyridoxine 5'-phosphate (PNP) or pyridoxamine 5'-phosphate (PMP) into pyridoxal 5'-phosphate (PLP). The sequence is that of Pyridoxine/pyridoxamine 5'-phosphate oxidase from Shewanella denitrificans (strain OS217 / ATCC BAA-1090 / DSM 15013).